The primary structure comprises 795 residues: Forkhead box protein P4 (795 aa).

Residues Met1–Ala25 show a composition bias toward polar residues. The interval Met1–Met62 is disordered. Residues Ala36–Asp45 show a composition bias toward low complexity. 2 positions are modified to phosphoserine: Ser58 and Ser92. Lys181 is covalently cross-linked (Glycyl lysine isopeptide (Lys-Gly) (interchain with G-Cter in SUMO2)). Disordered regions lie at residues Pro233–Gln252 and Thr265–Gly310. A compositionally biased stretch (basic and acidic residues) spans Ser292–Pro303. The C2H2-type zinc-finger motif lies at Gly312 to His337. Positions Val354–Leu375 are leucine-zipper. Positions Pro379–Lys437 are disordered. Lys383 participates in a covalent cross-link: Glycyl lysine isopeptide (Lys-Gly) (interchain with G-Cter in SUMO2). The segment at residues Arg459–Leu549 is a DNA-binding region (fork-head). A Phosphoserine modification is found at Ser546. Positions Ala589–Met671 are disordered. Residues Ser609–Ile627 show a composition bias toward polar residues. The segment covering Gln628 to Pro642 has biased composition (basic and acidic residues).

As to quaternary structure, forms homodimers and heterodimers with FOXP1 and FOXP2. Dimerization is required for DNA-binding. Expressed in the adult heart, brain, spleen lung, liver, kidney and testes.

The protein localises to the nucleus. Transcriptional repressor that represses lung-specific expression. The polypeptide is Forkhead box protein P4 (Mus musculus (Mouse)).